The sequence spans 325 residues: Heat-inducible transcription repressor HrcA (325 aa).

This sequence belongs to the HrcA family.

Negative regulator of class I heat shock genes (grpE-dnaK-dnaJ and groELS operons). Prevents heat-shock induction of these operons. In Staphylococcus haemolyticus (strain JCSC1435), this protein is Heat-inducible transcription repressor HrcA.